A 379-amino-acid polypeptide reads, in one-letter code: RIB43A-like with coiled-coils protein 1 (379 aa).

Residues 1-21 (MYNINQSTDTKEAAAIEARRN) are disordered. Positions 9-21 (DTKEAAAIEARRN) are enriched in basic and acidic residues. Coiled-coil stretches lie at residues 85 to 111 (ADRT…GREF), 161 to 241 (RYNL…KANL), and 280 to 304 (EQRA…QAEK).

This sequence belongs to the RIB43A family. In terms of assembly, microtubule inner protein component of sperm flagellar doublet microtubules.

Its subcellular location is the cytoplasm. The protein localises to the cytoskeleton. It localises to the flagellum axoneme. The polypeptide is RIB43A-like with coiled-coils protein 1 (RIBC1) (Macaca fascicularis (Crab-eating macaque)).